A 117-amino-acid polypeptide reads, in one-letter code: Eukaryotic translation initiation factor 4E-binding protein (117 aa).

T37 and T46 each carry phosphothreonine. A YXXXXLphi motif; atypical motif is present at residues 54-60 (YERAFMK). S65 is subject to Phosphoserine. T70 carries the post-translational modification Phosphothreonine.

This sequence belongs to the eIF4E-binding protein family. Hypophosphorylated Thor/4E-BP competes with eIF4G1 to interact with eIF4E1; insulin stimulated Akt1 or Tor phosphorylation of Thor/4E-BP causes dissociation of the complex allowing eIF4G1 to bind and consequent initiation of translation. Post-translationally, phosphorylation at Thr-37, Thr-46, Ser-65 and Thr-70, corresponding to the hyperphosphorylated form, impairs its ability to prevent the interaction between eIF4G1 and eIF4E1, without affecting its interaction with free eIF4E1. Phosphorylated in rtesponse to insulin. Phosphorylation at Thr-46 is regulated by Tor and constitutes the major phosphorylation event that regulates activity. Widely expressed.

Functionally, repressor of translation initiation that regulates eIF4E1 activity by preventing its assembly into the eIF4F complex. Hypophosphorylated form competes with eIF4G1 and strongly binds to eIF4E1, leading to repress translation. In contrast, hyperphosphorylated form dissociates from eIF4E1, allowing interaction between eIF4G1 and eIF4E1, leading to initiation of translation. Acts as a regulator of various biological processes, such as innate immunity, cell growth or synaptic transmission. Acts downstream of phosphoinositide-3-kinase (PI3K) to regulate cell growth. Extends lifespan upon dietary restriction by regulating the mitochondrial translation. Acts as a regulator of lifespan in response to cold by regulating the mitochondrial translation. Acts as a negative regulator of presynaptic release of neurotransmitter in motor neurons: Thor expression is induced in response to insulin signaling, leading to prevent of translation of complexin (cpx), a protein known to regulate the exocytosis of synaptic vesicles. Acts as a negative regulator of synaptic strength at the neuromuscular junction: Thor expression in response to acute fasting prevents translation, thereby suppressing retrograde synaptic enhancement. This chain is Eukaryotic translation initiation factor 4E-binding protein, found in Drosophila melanogaster (Fruit fly).